The following is a 428-amino-acid chain: Adenylosuccinate synthetase (428 aa).

GTP is bound by residues 12-18 (GDEGKGK) and 40-42 (GHS). Aspartate 13 functions as the Proton acceptor in the catalytic mechanism. The Mg(2+) site is built by aspartate 13 and glycine 40. IMP-binding positions include 13-16 (DEGK), 38-41 (NAGH), threonine 128, arginine 142, glutamine 223, threonine 238, and arginine 302. The active-site Proton donor is histidine 41. Residue 298–304 (VTTGRPR) coordinates substrate. GTP is bound by residues arginine 304, 330–332 (KLD), and 412–414 (GTG).

This sequence belongs to the adenylosuccinate synthetase family. As to quaternary structure, homodimer. Mg(2+) is required as a cofactor.

It localises to the cytoplasm. The catalysed reaction is IMP + L-aspartate + GTP = N(6)-(1,2-dicarboxyethyl)-AMP + GDP + phosphate + 2 H(+). It participates in purine metabolism; AMP biosynthesis via de novo pathway; AMP from IMP: step 1/2. In terms of biological role, plays an important role in the de novo pathway of purine nucleotide biosynthesis. Catalyzes the first committed step in the biosynthesis of AMP from IMP. The chain is Adenylosuccinate synthetase from Bifidobacterium longum subsp. infantis (strain ATCC 15697 / DSM 20088 / JCM 1222 / NCTC 11817 / S12).